Here is a 195-residue protein sequence, read N- to C-terminus: MLTEKFDNLVKQLRVLPGVGQKTAQRMALHLLNGRRGQGSALAQALDIAMHEIIECRQCHSFSDDDICPICVDPRRDDSVLCVVETAADVMAIEQAAGYRGRYFVLGGHLSPLDGINADDLNIDQLVNRVKTAPVDEIILATSTTVEGQTTAHFIAEAVRRHVGKVTRIAQGIPMGGELEYLDSMTLSQALQNRS.

A C4-type zinc finger spans residues 56–71 (CRQCHSFSDDDICPIC). A Toprim domain is found at 79–174 (SVLCVVETAA…KVTRIAQGIP (96 aa)).

Belongs to the RecR family.

Functionally, may play a role in DNA repair. It seems to be involved in an RecBC-independent recombinational process of DNA repair. It may act with RecF and RecO. The protein is Recombination protein RecR of Psychrobacter sp. (strain PRwf-1).